The following is a 23-amino-acid chain: Putative gene 50 protein (23 aa).

The polypeptide is Putative gene 50 protein (50) (Bacillus subtilis (Bacteriophage SP01)).